A 165-amino-acid chain; its full sequence is Nucleotide-binding protein SYNW1816 (165 aa).

The protein belongs to the YajQ family.

In terms of biological role, nucleotide-binding protein. In Parasynechococcus marenigrum (strain WH8102), this protein is Nucleotide-binding protein SYNW1816.